A 135-amino-acid polypeptide reads, in one-letter code: MNRLQLLSKGLRLIHKMSEEALAGVPLVHISPEGIFKYVMINVIDGGDASKAVIRGFADCTWHADIFEREEDVFKKLGLRAECPGGGRIEHNPDKKYLKVYGYSQGFGKADHAQTKRILATKYPDYTIEISDEGY.

Residue Lys37 coordinates substrate. His63 functions as the Proton acceptor in the catalytic mechanism. Ser104–Gly106 serves as a coordination point for substrate.

The protein belongs to the janus family.

Its function is as follows. JanA and janB regulate somatic sex differentiation. This chain is Sex-regulated protein janus-A (janA), found in Drosophila mauritiana (Fruit fly).